The primary structure comprises 284 residues: Tropomyosin (284 aa).

Residue Met-1 is modified to N-acetylmethionine. Disordered stretches follow at residues 1–49 (MDAI…NQKK) and 103–126 (EERLNTATTKLAEASQAADESERM). The stretch at 1–284 (MDAIKKKMQA…DQAFSELSGF (284 aa)) forms a coiled coil. The segment covering 12–45 (KLEKDNAMDKADTLEQQNKEANLRAEKTEEEIRA) has biased composition (basic and acidic residues).

Belongs to the tropomyosin family. In terms of assembly, homodimer. Expressed in leg muscle and chest protection muscle (at protein level).

In terms of biological role, tropomyosin, in association with the troponin complex, plays a central role in the calcium dependent regulation of muscle contraction. This is Tropomyosin from Chionoecetes opilio (Atlantic snow crab).